Here is a 130-residue protein sequence, read N- to C-terminus: Protein CPn_0713/CP_0033/CPj0713/CpB0740 (130 aa).

It belongs to the chlamydial CPn_0713/CT_663/TC_0034 family.

This is Protein CPn_0713/CP_0033/CPj0713/CpB0740 from Chlamydia pneumoniae (Chlamydophila pneumoniae).